The chain runs to 386 residues: Cytotoxic granule associated RNA binding protein TIA1 (386 aa).

Met1 is subject to N-acetylmethionine. RRM domains lie at 7-83 (KTLY…WATT), 106-184 (FHVF…WATR), and 214-286 (CTVY…WGKE). Residues 355-376 (GPNYSVPPPQGQNGSMLPSQPA) are disordered.

In terms of assembly, homooligomer; homooligomerization is induced by Zn(2+). Interacts with FASTK; the interactions leads to its phosphorylation. Interacts (via RRM1 and the C-terminal glutamine-rich (Q) sequence) with SNRPC/U1-C (via N-terminus); thereby facilitating spliceosomal U1 snRNP recruitment to 5' splice sites. Post-translationally, phosphorylatedby FASTK; phosphorylation occurs after FAS ligation in FAS-mediated apoptosis and before DNA fragmentation.

It localises to the nucleus. The protein localises to the cytoplasm. It is found in the stress granule. In terms of biological role, RNA-binding protein involved in the regulation of alternative pre-RNA splicing and mRNA translation by binding to uridine-rich (U-rich) RNA sequences. Binds to U-rich sequences immediately downstream from a 5' splice sites in a uridine-rich small nuclear ribonucleoprotein (U snRNP)-dependent fashion, thereby modulating alternative pre-RNA splicing. Preferably binds to the U-rich IAS1 sequence in a U1 snRNP-dependent manner; this binding is optimal if a 5' splice site is adjacent to IAS1. Activates the use of heterologous 5' splice sites; the activation depends on the intron sequence downstream from the 5' splice site, with a preference for a downstream U-rich sequence. By interacting with SNRPC/U1-C, promotes recruitment and binding of spliceosomal U1 snRNP to 5' splice sites followed by U-rich sequences, thereby facilitating atypical 5' splice site recognition by U1 snRNP. Activates splicing of alternative exons with weak 5' splice sites followed by a U-rich stretch on its own pre-mRNA and on TIAR mRNA. Acts as a modulator of alternative splicing for the apoptotic FAS receptor, thereby promoting apoptosis. Binds to the 5' splice site region of FAS intron 5 to promote accumulation of transcripts that include exon 6 at the expense of transcripts in which exon 6 is skipped, thereby leading to the transcription of a membrane-bound apoptotic FAS receptor, which promotes apoptosis. Binds to a conserved AU-rich cis element in COL2A1 intron 2 and modulates alternative splicing of COL2A1 exon 2. Also binds to the equivalent AT-rich element in COL2A1 genomic DNA, and may thereby be involved in the regulation of transcription. Involved in the repression of mRNA translation by binding to AU-rich elements (AREs) located in mRNA 3' untranslated regions (3' UTRs), including target ARE-bearing mRNAs encoding TNF and PTGS2. Also participates in the cellular response to environmental stress, by acting downstream of the stress-induced phosphorylation of EIF2S1/EIF2A to promote the recruitment of untranslated mRNAs to cytoplasmic stress granules (SGs), leading to stress-induced translational arrest. Formation and recruitment to SGs is regulated by Zn(2+). Possesses nucleolytic activity against cytotoxic lymphocyte target cells. This chain is Cytotoxic granule associated RNA binding protein TIA1 (Tia1), found in Mus musculus (Mouse).